The following is a 432-amino-acid chain: D-amino acid dehydrogenase (432 aa).

Residue 3–17 (VVILGSGVVGVASAW) participates in FAD binding.

Belongs to the DadA oxidoreductase family. It depends on FAD as a cofactor.

It carries out the reaction a D-alpha-amino acid + A + H2O = a 2-oxocarboxylate + AH2 + NH4(+). It functions in the pathway amino-acid degradation; D-alanine degradation; NH(3) and pyruvate from D-alanine: step 1/1. Functionally, oxidative deamination of D-amino acids. The sequence is that of D-amino acid dehydrogenase from Shigella dysenteriae serotype 1 (strain Sd197).